The following is a 557-amino-acid chain: Hepatocyte nuclear factor 1-beta (557 aa).

The interval 1–31 is dimerization; that stretch reads MVSKLTSLQQELLSALLSSGVTKEVLVQALE. An HNF-p1 domain is found at 1–32; that stretch reads MVSKLTSLQQELLSALLSSGVTKEVLVQALEE. A phosphoserine mark is found at Ser49, Ser52, Ser75, and Ser80. The tract at residues 64 to 85 is disordered; that stretch reads TLTNGHAKGRLSGDEGSEDGDD. The region spanning 93-188 is the POU-specific atypical domain; sequence KELQALNTEE…ILRQFNQTVQ (96 aa). Residues 231 to 311 constitute a DNA-binding region (homeobox; HNF1-type); it reads MRRNRFKWGP…NRRKEEAFRQ (81 aa). The interval 324-370 is disordered; that stretch reads HSLNPLLSHGSPHHQPSSSPPNKLSGVRYSQQGNNEVTSSSTISHHG. The segment covering 328 to 344 has biased composition (low complexity); it reads PLLSHGSPHHQPSSSPP. Positions 351 to 370 are enriched in polar residues; sequence RYSQQGNNEVTSSSTISHHG.

Belongs to the HNF1 homeobox family. In terms of assembly, binds DNA as a dimer. Can form homodimer or heterodimer with HNF1-alpha. Interacts (via HNF-p1 domain) with PCBD1; the interaction increases its transactivation activity.

The protein localises to the nucleus. Transcription factor that binds to the inverted palindrome 5'-GTTAATNATTAAC-3'. Binds to the FPC element in the cAMP regulatory unit of the PLAU gene. Transcriptional activity is increased by coactivator PCBD1. The protein is Hepatocyte nuclear factor 1-beta (HNF1B) of Pongo abelii (Sumatran orangutan).